We begin with the raw amino-acid sequence, 63 residues long: Large ribosomal subunit protein bL35 (63 aa).

Belongs to the bacterial ribosomal protein bL35 family.

This chain is Large ribosomal subunit protein bL35, found in Campylobacter fetus subsp. fetus (strain 82-40).